The chain runs to 115 residues: NADH-ubiquinone oxidoreductase chain 3 (115 aa).

3 helical membrane-spanning segments follow: residues 3-23 (LFVALFINASLSFILISVAFW), 55-75 (FFLVAITFLLFDLEIALLLPL), and 84-104 (LSAMMITSFILISILALGLIY).

This sequence belongs to the complex I subunit 3 family. As to quaternary structure, core subunit of respiratory chain NADH dehydrogenase (Complex I) which is composed of 45 different subunits. Interacts with TMEM186. Interacts with TMEM242.

It localises to the mitochondrion inner membrane. The enzyme catalyses a ubiquinone + NADH + 5 H(+)(in) = a ubiquinol + NAD(+) + 4 H(+)(out). In terms of biological role, core subunit of the mitochondrial membrane respiratory chain NADH dehydrogenase (Complex I) which catalyzes electron transfer from NADH through the respiratory chain, using ubiquinone as an electron acceptor. Essential for the catalytic activity of complex I. The protein is NADH-ubiquinone oxidoreductase chain 3 of Sigmodon hispidus (Hispid cotton rat).